The primary structure comprises 1014 residues: Klotho (1014 aa).

A signal peptide spans 1–34; that stretch reads MPARAPPRRLPRLLLLRLLSLHLLLLTLRARCLS. The Extracellular portion of the chain corresponds to 35–983; the sequence is AEPGQGAQTW…GCGFFQTRKS (949 aa). Glycosyl hydrolase-1 stretches follow at residues 59 to 508 and 517 to 955; these read LHDT…NNGF and LEGT…NNGF. N-linked (GlcNAc...) asparagine glycosylation is found at N161, N285, N346, N609, N614, and N696. A helical membrane pass occupies residues 984-1004; that stretch reads LLAFISFLVFAFVTSLALIYY. Residues 1005 to 1014 are Cytoplasmic-facing; that stretch reads YSKKGRRRYK.

Belongs to the glycosyl hydrolase 1 family. Klotho subfamily. As to quaternary structure, homodimer. Interacts with FGF23 and FGFR1. Post-translationally, N-glycosylated. Present in cortical renal tubules and the parathyroid (at protein level). Strongly expressed in kidney. Expressed at low levels in brain, lung, intestine and ovaries.

It localises to the cell membrane. It is found in the apical cell membrane. Its subcellular location is the secreted. It carries out the reaction a beta-D-glucuronoside + H2O = D-glucuronate + an alcohol. In terms of biological role, may have weak glycosidase activity towards glucuronylated steroids. However, it lacks essential active site Glu residues at positions 241 and 874, suggesting it may be inactive as a glycosidase in vivo. May be involved in the regulation of calcium and phosphorus homeostasis by inhibiting the synthesis of active vitamin D. Essential factor for the specific interaction between FGF23 and FGFR1. The Klotho peptide generated by cleavage of the membrane-bound isoform may be an anti-aging circulating hormone which would extend life span by inhibiting insulin/IGF1 signaling. This Rattus norvegicus (Rat) protein is Klotho (Kl).